A 189-amino-acid polypeptide reads, in one-letter code: Translation initiation factor IF-3 (189 aa).

It belongs to the IF-3 family. Monomer.

It is found in the cytoplasm. In terms of biological role, IF-3 binds to the 30S ribosomal subunit and shifts the equilibrium between 70S ribosomes and their 50S and 30S subunits in favor of the free subunits, thus enhancing the availability of 30S subunits on which protein synthesis initiation begins. The protein is Translation initiation factor IF-3 of Corynebacterium glutamicum (strain ATCC 13032 / DSM 20300 / JCM 1318 / BCRC 11384 / CCUG 27702 / LMG 3730 / NBRC 12168 / NCIMB 10025 / NRRL B-2784 / 534).